Here is a 229-residue protein sequence, read N- to C-terminus: MSKLSHSEVLIMIQGGLVVSCQPVDDGPMDQPAIVAAMAQAAIVGGAVGVRIEGVQNLKATRPMVTAPIIAIVKRDLPESAVRITPFLADIDQLAAAGADIIAVDGTDRERPVAVVAALERIHAQGCLAMADCSTLAEGLYCQQLGFDIIGSTMSGYTGGELPVEPDYQLVKDLKSAGCYVMAEGRYNSPALAKSAMQMGADCVTVGSALTRLEHMVSWFAVAVQSAKE.

It belongs to the NanE family.

The enzyme catalyses an N-acyl-D-glucosamine 6-phosphate = an N-acyl-D-mannosamine 6-phosphate. It functions in the pathway amino-sugar metabolism; N-acetylneuraminate degradation; D-fructose 6-phosphate from N-acetylneuraminate: step 3/5. Functionally, converts N-acetylmannosamine-6-phosphate (ManNAc-6-P) to N-acetylglucosamine-6-phosphate (GlcNAc-6-P). This chain is Putative N-acetylmannosamine-6-phosphate 2-epimerase, found in Haemophilus ducreyi (strain 35000HP / ATCC 700724).